Here is a 353-residue protein sequence, read N- to C-terminus: Quinolinate synthase (353 aa).

Residues His-47 and Ser-68 each contribute to the iminosuccinate site. Residue Cys-113 coordinates [4Fe-4S] cluster. Iminosuccinate is bound by residues 139 to 141 (YAN) and Ser-156. A [4Fe-4S] cluster-binding site is contributed by Cys-200. Iminosuccinate-binding positions include 226-228 (HPE) and Thr-243. Residue Cys-297 coordinates [4Fe-4S] cluster.

Belongs to the quinolinate synthase family. Type 1 subfamily. The cofactor is [4Fe-4S] cluster.

Its subcellular location is the cytoplasm. It catalyses the reaction iminosuccinate + dihydroxyacetone phosphate = quinolinate + phosphate + 2 H2O + H(+). It participates in cofactor biosynthesis; NAD(+) biosynthesis; quinolinate from iminoaspartate: step 1/1. In terms of biological role, catalyzes the condensation of iminoaspartate with dihydroxyacetone phosphate to form quinolinate. The protein is Quinolinate synthase of Pectobacterium atrosepticum (strain SCRI 1043 / ATCC BAA-672) (Erwinia carotovora subsp. atroseptica).